Here is a 78-residue protein sequence, read N- to C-terminus: Beta-defensin 105A (78 aa).

Residues 1–27 (MALIRKTFYFLFAVFFILVQLPSGCQA) form the signal peptide. Intrachain disulfides connect Cys43–Cys74, Cys53–Cys67, and Cys57–Cys73.

The protein belongs to the beta-defensin family.

The protein resides in the secreted. Functionally, has antimicrobial activity. The polypeptide is Beta-defensin 105A (DEFB105A) (Gorilla gorilla gorilla (Western lowland gorilla)).